The following is a 55-amino-acid chain: Methylmalonyl-CoA decarboxylase subunit epsilon (55 aa).

The methylmalonyl-CoA decarboxylase is composed of five subunits: the carboxyltransferase alpha subunit (MmdA), the tunnel beta subunit (MmdB), the biotin-containing gamma subunit (MmdC), and the delta (MmdD) and epsilon (MmdE) subunits.

Its subcellular location is the cell membrane. The enzyme catalyses (S)-methylmalonyl-CoA + Na(+)(in) + H(+)(out) = propanoyl-CoA + Na(+)(out) + CO2. With respect to regulation, completely inhibited by avidin. Functionally, subunit of the sodium ion pump methylmalonyl-CoA decarboxylase, which converts the chemical energy of a decarboxylation reaction into an electrochemical gradient of Na(+) ions across the cytoplasmic membrane, thereby creating a sodium ion motive force that is used for ATP synthesis. The epsilon subunit seems not important for the catalysis of either decarboxylation or Na(+) transport, but it improves binding of the alpha subunit and plays an important role in stabilizing the methylmalonyl-CoA-decarboxylase enzyme complex. Can also convert malonyl-CoA into acetyl-CoA. This Veillonella parvula (Staphylococcus parvulus) protein is Methylmalonyl-CoA decarboxylase subunit epsilon.